The following is a 449-amino-acid chain: MSTALVILAAGKGTRMNSDLPKVLHQIAHAPMLEHAMRAGGALDPERTVVVAGHEAEMVRAATAEIAPEATVVLQEEQLGTGHAVLQARAALEGFRGDVVVLYGDTPFVSAETLERMIEARSRADLVILGFEAADPARYGRLIMQGESLEKIVEFKDASDAERAITFCNSGLMACNAEVMFGLLDQVGNDNASGEYYLTDLVELARAEGLSVTAVSCPEAETLGINSRADLAAAEAVFQAHARAELLDIGVTLTAPETVHLAFDTIIGRDTVIEPNVVFGPGVTVESGALIRAFSHLEGCHVSRGAKVGPYARLRPGAELAEDTHVGNFVEIKNAEIAAGAKVNHLTYIGDASVGEATNIGAGTITCNYDGVMKHRTEIGARAFIGSNTCLVAPVTVGDEAMTATGAVITKDVADGDLAIARVQQTNKPGRARKLMDMLRAKKAAKAKG.

Residues 1-228 (MSTALVILAA…EAETLGINSR (228 aa)) are pyrophosphorylase. UDP-N-acetyl-alpha-D-glucosamine is bound by residues 8–11 (LAAG), Lys22, Gln75, 80–81 (GT), 103–105 (YGD), Gly140, Glu154, Asn169, and Asn226. Mg(2+) is bound at residue Asp105. Mg(2+) is bound at residue Asn226. The segment at 229 to 249 (ADLAAAEAVFQAHARAELLDI) is linker. An N-acetyltransferase region spans residues 250 to 449 (GVTLTAPETV…RAKKAAKAKG (200 aa)). 2 residues coordinate UDP-N-acetyl-alpha-D-glucosamine: Arg315 and Lys333. His345 (proton acceptor) is an active-site residue. UDP-N-acetyl-alpha-D-glucosamine is bound by residues Tyr348 and Asn359. Acetyl-CoA-binding positions include Ala362, 368–369 (NY), Ser387, Thr405, and Arg422.

It in the N-terminal section; belongs to the N-acetylglucosamine-1-phosphate uridyltransferase family. This sequence in the C-terminal section; belongs to the transferase hexapeptide repeat family. Homotrimer. Mg(2+) serves as cofactor.

It localises to the cytoplasm. It catalyses the reaction alpha-D-glucosamine 1-phosphate + acetyl-CoA = N-acetyl-alpha-D-glucosamine 1-phosphate + CoA + H(+). It carries out the reaction N-acetyl-alpha-D-glucosamine 1-phosphate + UTP + H(+) = UDP-N-acetyl-alpha-D-glucosamine + diphosphate. It functions in the pathway nucleotide-sugar biosynthesis; UDP-N-acetyl-alpha-D-glucosamine biosynthesis; N-acetyl-alpha-D-glucosamine 1-phosphate from alpha-D-glucosamine 6-phosphate (route II): step 2/2. Its pathway is nucleotide-sugar biosynthesis; UDP-N-acetyl-alpha-D-glucosamine biosynthesis; UDP-N-acetyl-alpha-D-glucosamine from N-acetyl-alpha-D-glucosamine 1-phosphate: step 1/1. The protein operates within bacterial outer membrane biogenesis; LPS lipid A biosynthesis. Its function is as follows. Catalyzes the last two sequential reactions in the de novo biosynthetic pathway for UDP-N-acetylglucosamine (UDP-GlcNAc). The C-terminal domain catalyzes the transfer of acetyl group from acetyl coenzyme A to glucosamine-1-phosphate (GlcN-1-P) to produce N-acetylglucosamine-1-phosphate (GlcNAc-1-P), which is converted into UDP-GlcNAc by the transfer of uridine 5-monophosphate (from uridine 5-triphosphate), a reaction catalyzed by the N-terminal domain. The polypeptide is Bifunctional protein GlmU (Ruegeria sp. (strain TM1040) (Silicibacter sp.)).